The chain runs to 138 residues: Cysteine desulfuration protein SufE (138 aa).

Cys-51 functions as the Cysteine persulfide intermediate in the catalytic mechanism.

This sequence belongs to the SufE family. In terms of assembly, homodimer. Interacts with SufS.

It localises to the cytoplasm. It functions in the pathway cofactor biosynthesis; iron-sulfur cluster biosynthesis. Participates in cysteine desulfuration mediated by SufS. Cysteine desulfuration mobilizes sulfur from L-cysteine to yield L-alanine and constitutes an essential step in sulfur metabolism for biosynthesis of a variety of sulfur-containing biomolecules. Functions as a sulfur acceptor for SufS, by mediating the direct transfer of the sulfur atom from the S-sulfanylcysteine of SufS, an intermediate product of cysteine desulfuration process. This is Cysteine desulfuration protein SufE from Cronobacter sakazakii (strain ATCC BAA-894) (Enterobacter sakazakii).